Reading from the N-terminus, the 1073-residue chain is Probable inorganic carbon transporter subunit DabA 2 (1073 aa).

Over residues 1–20 (MSSGNTSSQNHSPVNNQPTR) the composition is skewed to polar residues. The tract at residues 1–35 (MSSGNTSSQNHSPVNNQPTRLKSPLPALHKDTQPN) is disordered. Zn(2+)-binding residues include Cys535, Asp537, His721, and Cys736.

It belongs to the inorganic carbon transporter (TC 9.A.2) DabA family. As to quaternary structure, forms a complex with DabB. Zn(2+) is required as a cofactor.

The protein localises to the cell inner membrane. Part of an energy-coupled inorganic carbon pump. The polypeptide is Probable inorganic carbon transporter subunit DabA 2 (Rhodopirellula baltica (strain DSM 10527 / NCIMB 13988 / SH1)).